The chain runs to 335 residues: Peroxidase 2 (335 aa).

The first 29 residues, 1 to 29, serve as a signal peptide directing secretion; sequence MAAATAPKTMPSSVFAAALLLLAAAACQA. 4 disulfide bridges follow: C44/C125, C77/C82, C131/C329, and C212/C238. The Proton acceptor role is filled by H75. The Ca(2+) site is built by D76, V79, G81, D83, and S85. Residues N166 and N180 are each glycosylated (N-linked (GlcNAc...) asparagine). Residue H205 coordinates heme b. A Ca(2+)-binding site is contributed by T206. N241 carries N-linked (GlcNAc...) asparagine glycosylation. Ca(2+)-binding residues include D253, T256, and D261.

The protein belongs to the peroxidase family. Classical plant (class III) peroxidase subfamily. The cofactor is heme b. Ca(2+) is required as a cofactor. Expressed in the elongating region of young roots, and in root vascular tissues and epidermis.

The protein resides in the secreted. The catalysed reaction is 2 a phenolic donor + H2O2 = 2 a phenolic radical donor + 2 H2O. Its function is as follows. Removal of H(2)O(2), oxidation of toxic reductants, biosynthesis and degradation of lignin, suberization, auxin catabolism, response to environmental stresses such as wounding, pathogen attack and oxidative stress. These functions might be dependent on each isozyme/isoform in each plant tissue. This chain is Peroxidase 2 (PER2), found in Zea mays (Maize).